Here is a 151-residue protein sequence, read N- to C-terminus: Methylglyoxal synthase (151 aa).

An MGS-like domain is found at 6–151 (RTMPAHKHVA…DYEAYLAERM (146 aa)). Residues histidine 19, lysine 23, 45–48 (TGTT), and 65–66 (SG) contribute to the substrate site. Aspartate 71 serves as the catalytic Proton donor/acceptor. Position 98 (histidine 98) interacts with substrate.

This sequence belongs to the methylglyoxal synthase family.

The catalysed reaction is dihydroxyacetone phosphate = methylglyoxal + phosphate. In terms of biological role, catalyzes the formation of methylglyoxal from dihydroxyacetone phosphate. This chain is Methylglyoxal synthase, found in Vibrio parahaemolyticus serotype O3:K6 (strain RIMD 2210633).